The sequence spans 476 residues: Aspartyl/glutamyl-tRNA(Asn/Gln) amidotransferase subunit B (476 aa).

This sequence belongs to the GatB/GatE family. GatB subfamily. Heterotrimer of A, B and C subunits.

It carries out the reaction L-glutamyl-tRNA(Gln) + L-glutamine + ATP + H2O = L-glutaminyl-tRNA(Gln) + L-glutamate + ADP + phosphate + H(+). It catalyses the reaction L-aspartyl-tRNA(Asn) + L-glutamine + ATP + H2O = L-asparaginyl-tRNA(Asn) + L-glutamate + ADP + phosphate + 2 H(+). Its function is as follows. Allows the formation of correctly charged Asn-tRNA(Asn) or Gln-tRNA(Gln) through the transamidation of misacylated Asp-tRNA(Asn) or Glu-tRNA(Gln) in organisms which lack either or both of asparaginyl-tRNA or glutaminyl-tRNA synthetases. The reaction takes place in the presence of glutamine and ATP through an activated phospho-Asp-tRNA(Asn) or phospho-Glu-tRNA(Gln). This Clostridium botulinum (strain Eklund 17B / Type B) protein is Aspartyl/glutamyl-tRNA(Asn/Gln) amidotransferase subunit B.